Reading from the N-terminus, the 122-residue chain is FMN-binding protein (122 aa).

Monomer and homodimer. The cofactor is FMN.

It localises to the cytoplasm. Functions as a redox protein with a potential of -325 mV. In Nitratidesulfovibrio vulgaris (strain DSM 19637 / Miyazaki F) (Desulfovibrio vulgaris), this protein is FMN-binding protein.